We begin with the raw amino-acid sequence, 374 residues long: Protein STRICTOSIDINE SYNTHASE-LIKE 10 (374 aa).

The first 18 residues, 1–18, serve as a signal peptide directing secretion; it reads MTMMIITVFLTVIAAVLA. The N-linked (GlcNAc...) asparagine glycan is linked to Asn50.

This sequence belongs to the strictosidine synthase family.

Its subcellular location is the vacuole. This is Protein STRICTOSIDINE SYNTHASE-LIKE 10 from Arabidopsis thaliana (Mouse-ear cress).